Reading from the N-terminus, the 114-residue chain is UPF0102 protein jhp_0762 (114 aa).

It belongs to the UPF0102 family.

This chain is UPF0102 protein jhp_0762, found in Helicobacter pylori (strain J99 / ATCC 700824) (Campylobacter pylori J99).